We begin with the raw amino-acid sequence, 266 residues long: Glucosamine-6-phosphate deaminase (266 aa).

The active-site Proton acceptor; for enolization step is the Asp72. Asp141 functions as the For ring-opening step in the catalytic mechanism. Residue His143 is the Proton acceptor; for ring-opening step of the active site. Residue Glu148 is the For ring-opening step of the active site.

This sequence belongs to the glucosamine/galactosamine-6-phosphate isomerase family. NagB subfamily. Homohexamer.

The enzyme catalyses alpha-D-glucosamine 6-phosphate + H2O = beta-D-fructose 6-phosphate + NH4(+). It participates in amino-sugar metabolism; N-acetylneuraminate degradation; D-fructose 6-phosphate from N-acetylneuraminate: step 5/5. With respect to regulation, allosterically activated by N-acetylglucosamine 6-phosphate (GlcNAc6P). Its function is as follows. Catalyzes the reversible isomerization-deamination of glucosamine 6-phosphate (GlcN6P) to form fructose 6-phosphate (Fru6P) and ammonium ion. The sequence is that of Glucosamine-6-phosphate deaminase from Klebsiella pneumoniae (strain 342).